Consider the following 132-residue polypeptide: MNLIEQLEREEIERLGKTIPDFSPGDTLVVNVNVVEGDRKRVQAFEGVVIAKRNRGLNSSFIVRKISSGEAVERTFQTYSPLIASMEVKRRGAVRRAKLYYLRDRSGKAARIREKLPARSVQQENVAEALQP.

The protein belongs to the bacterial ribosomal protein bL19 family.

Its function is as follows. This protein is located at the 30S-50S ribosomal subunit interface and may play a role in the structure and function of the aminoacyl-tRNA binding site. The chain is Large ribosomal subunit protein bL19 from Nitrosomonas europaea (strain ATCC 19718 / CIP 103999 / KCTC 2705 / NBRC 14298).